The following is a 193-amino-acid chain: Large ribosomal subunit protein bL25 (193 aa).

Belongs to the bacterial ribosomal protein bL25 family. CTC subfamily. As to quaternary structure, part of the 50S ribosomal subunit; part of the 5S rRNA/L5/L18/L25 subcomplex. Contacts the 5S rRNA. Binds to the 5S rRNA independently of L5 and L18.

Functionally, this is one of the proteins that binds to the 5S RNA in the ribosome where it forms part of the central protuberance. In Lachnoclostridium phytofermentans (strain ATCC 700394 / DSM 18823 / ISDg) (Clostridium phytofermentans), this protein is Large ribosomal subunit protein bL25.